The sequence spans 1066 residues: Ubiquitin conjugation factor E4 A (1066 aa).

The segment at 33–57 is disordered; that stretch reads KEQLKQQSDELPASPDDSDNSVSES. Residue Lys-386 is modified to N6-acetyllysine. Residues 987–1061 form the U-box domain; that stretch reads DACDEFLDPI…QRWLAERKQQ (75 aa).

The protein belongs to the ubiquitin conjugation factor E4 family.

It is found in the cytoplasm. The catalysed reaction is S-ubiquitinyl-[E2 ubiquitin-conjugating enzyme]-L-cysteine + [acceptor protein]-L-lysine = [E2 ubiquitin-conjugating enzyme]-L-cysteine + N(6)-ubiquitinyl-[acceptor protein]-L-lysine.. The protein operates within protein modification; protein ubiquitination. Functionally, ubiquitin-protein ligase that probably functions as an E3 ligase in conjunction with specific E1 and E2 ligases. May also function as an E4 ligase mediating the assembly of polyubiquitin chains on substrates ubiquitinated by another E3 ubiquitin ligase. Mediates 'Lys-48'-linked polyubiquitination of substrates. The protein is Ubiquitin conjugation factor E4 A of Pongo abelii (Sumatran orangutan).